Reading from the N-terminus, the 368-residue chain is UV excision repair protein rhp23 (368 aa).

The 77-residue stretch at 1 to 77 folds into the Ubiquitin-like domain; it reads MNLTFKNLQQ…IVCMVSRPKT (77 aa). Composition is skewed to low complexity over residues 76 to 88 and 103 to 124; these read KTST…AASP and APSS…AAPS. The disordered stretch occupies residues 76-134; sequence KTSTSTPKSAASPAPNPPASVPEKKVEAPSSTVAESTSTTQTVAAAAPSNPDTTATSEA. Phosphoserine occurs at positions 84 and 87. UBA domains follow at residues 135 to 185 and 320 to 360; these read PIDA…LLTG and QEES…LFEH. S364 is subject to Phosphoserine.

Its subcellular location is the nucleus. Functionally, involved in postreplication repair of UV-damaged DNA. Postreplication repair functions in gap-filling of a daughter strand on replication of damaged DNA. In terms of biological role, protects ubiquitin chains against dissambly by deubiquitinating enzymes thereby promoting protein degradation. This chain is UV excision repair protein rhp23 (rhp23), found in Schizosaccharomyces pombe (strain 972 / ATCC 24843) (Fission yeast).